The primary structure comprises 543 residues: Thermosome subunit beta (543 aa).

A disordered region spans residues 522–543 (TKSSSSSSNPPKSGSSSESSED). Residues 523-543 (KSSSSSSNPPKSGSSSESSED) are compositionally biased toward low complexity.

The protein belongs to the TCP-1 chaperonin family. In terms of assembly, forms a Heterooligomeric complex of two stacked eight-membered rings. In terms of processing, the N-terminus is blocked.

Molecular chaperone; binds unfolded polypeptides in vitro, and has a weak ATPase activity. The sequence is that of Thermosome subunit beta (thsB) from Thermoplasma acidophilum (strain ATCC 25905 / DSM 1728 / JCM 9062 / NBRC 15155 / AMRC-C165).